Here is a 484-residue protein sequence, read N- to C-terminus: MSGEQELGITESKEHSPGEWYAEVVQKAGLADYAPMGGFIVTRPRGYAIWERIQNNLDGWFKDTGVQNAYFPLFIPESYLEKEKDVVEGFDPEVAWVTHGGHNELEERLAVRPTSESIIAPFMAQWTRSHRDLPMRLNQWCSVVRWEATETKPFFRTKEFLWQEGHTAHADEDGAWEETMTRLDQYARLYEEVMAMPPLKGRKPPHDKFPGAHTTTTIETLMPDGKTVQAATSHYLGTSFGEAFDITYADADEEENTAHTTSWGLSWRAMGALIMTHSDDQGLVLPPALAPDQVVVVPIWQEDNKDEVIDYAADLAAELDEADVRVELDDREHRNPGFKYNEHELHGVPLRVEIGPHEVEDGEATLVHRPDGETETVDRDGIADTVTDHLDTVHAKLYASAEETLEGEIREAESREEILGTIGQHGGYVKCGWCGDEDCEEPIKDAIAAEIVMVPLDRDEEPIHEDCAICGEDAEETAYFAKSY.

Belongs to the class-II aminoacyl-tRNA synthetase family. ProS type 3 subfamily. Homodimer.

The protein resides in the cytoplasm. The catalysed reaction is tRNA(Pro) + L-proline + ATP = L-prolyl-tRNA(Pro) + AMP + diphosphate. Its function is as follows. Catalyzes the attachment of proline to tRNA(Pro) in a two-step reaction: proline is first activated by ATP to form Pro-AMP and then transferred to the acceptor end of tRNA(Pro). The chain is Proline--tRNA ligase from Haloarcula marismortui (strain ATCC 43049 / DSM 3752 / JCM 8966 / VKM B-1809) (Halobacterium marismortui).